The primary structure comprises 347 residues: MSDMIHFDSSWDIRVTDTSLRDGSHHKRHQFTVEEVRAIVGALDGAGVPVIEVTHGDGLGGSSFNYGFSKTPEQELIKAAVETATNAKIAFLMLPGLGIKDDIVIAQDNGASICRIATHCTEADVSIQHFGLARERGLETVGFLMMAHSIPPEKLAKQARIMADAGCQCVYVVDSAGALVLEQVSDRVEALVQELGNDAQVGFHGHENLGLGVANSIAAVRAGAKQIDGSTRRFGAGAGNAPVEAFVGVCDKIGVKTGIDFFAIADAAEDVVRPAMPQECLLDRQALMMGYAGVYSSFLKHAERQAERYGVSSAELLVRAGKRKLVGGQEDQLIDIALELQREAAAS.

One can recognise a Pyruvate carboxyltransferase domain in the interval Ile13–Ala265. A substrate-binding site is contributed by Arg21–Asp22. Asp22 is a Mn(2+) binding site. His25 serves as the catalytic Proton acceptor. Positions 175 and 204 each coordinate substrate. 2 residues coordinate Mn(2+): His204 and His206. Residue Tyr295 coordinates substrate.

Belongs to the 4-hydroxy-2-oxovalerate aldolase family.

The catalysed reaction is (S)-4-hydroxy-2-oxopentanoate = acetaldehyde + pyruvate. In Rhodococcus erythropolis (strain PR4 / NBRC 100887), this protein is 4-hydroxy-2-oxovalerate aldolase 1.